The sequence spans 363 residues: UDP-3-O-acylglucosamine N-acyltransferase (363 aa).

His-266 acts as the Proton acceptor in catalysis.

Belongs to the transferase hexapeptide repeat family. LpxD subfamily. In terms of assembly, homotrimer.

The enzyme catalyses a UDP-3-O-[(3R)-3-hydroxyacyl]-alpha-D-glucosamine + a (3R)-hydroxyacyl-[ACP] = a UDP-2-N,3-O-bis[(3R)-3-hydroxyacyl]-alpha-D-glucosamine + holo-[ACP] + H(+). The protein operates within bacterial outer membrane biogenesis; LPS lipid A biosynthesis. Its function is as follows. Catalyzes the N-acylation of UDP-3-O-acylglucosamine using 3-hydroxyacyl-ACP as the acyl donor. Is involved in the biosynthesis of lipid A, a phosphorylated glycolipid that anchors the lipopolysaccharide to the outer membrane of the cell. In Bordetella bronchiseptica (strain ATCC BAA-588 / NCTC 13252 / RB50) (Alcaligenes bronchisepticus), this protein is UDP-3-O-acylglucosamine N-acyltransferase.